Here is a 640-residue protein sequence, read N- to C-terminus: (Z)-beta-ocimene synthase TPS13PK, chloroplastic (640 aa).

A chloroplast-targeting transit peptide spans 1 to 95 (MAALVSTVSS…PFKDEAYVKR (95 aa)). Residues 50-69 (MSTNNNNNNNQKNSSRRSAN) form a disordered region. Residues 60-69 (QKNSSRRSAN) are compositionally biased toward polar residues. Positions 334, 371, 375, 515, and 518 each coordinate (2E)-geranyl diphosphate. 2 residues coordinate Mg(2+): Asp-371 and Asp-375. Residues 371–375 (DDIYD) carry the DDXXD motif motif. Mg(2+) is bound by residues Asp-518, Thr-522, and Glu-526.

It belongs to the terpene synthase family. In terms of assembly, monomer. Mg(2+) serves as cofactor.

Its subcellular location is the plastid. It is found in the chloroplast. The catalysed reaction is (2E)-geranyl diphosphate = (Z)-beta-ocimene + diphosphate. The protein operates within secondary metabolite biosynthesis; terpenoid biosynthesis. Involved in monoterpene (C10) olefins biosynthesis, constituants of cannabinoids and terpenoids-rich resins. Catalyzes mainly the conversion of (2E)-geranyl diphosphate to (Z)-beta-ocimene. This is (Z)-beta-ocimene synthase TPS13PK, chloroplastic from Cannabis sativa (Hemp).